Reading from the N-terminus, the 227-residue chain is Isopentenyl-diphosphate Delta-isomerase 1 (227 aa).

Residue lysine 36 participates in substrate binding. Positions 40 and 51 each coordinate Mg(2+). The region spanning 49–199 (LLHRAFSVFL…EIKITPWFKI (151 aa)) is the Nudix hydrolase domain. Residues arginine 70 and lysine 74 each coordinate substrate. Cysteine 86 is a catalytic residue. Serine 87 is a substrate binding site. Residues glutamate 146 and glutamate 148 each coordinate Mg(2+). Glutamate 148 is a catalytic residue. At lysine 176 the chain carries N6-acetyllysine. The Microbody targeting signal motif lies at 225–227 (YRI).

It belongs to the IPP isomerase type 1 family. Monomer. The cofactor is Mg(2+).

It localises to the peroxisome. It carries out the reaction isopentenyl diphosphate = dimethylallyl diphosphate. Its pathway is isoprenoid biosynthesis; dimethylallyl diphosphate biosynthesis; dimethylallyl diphosphate from isopentenyl diphosphate: step 1/1. Functionally, catalyzes the 1,3-allylic rearrangement of the homoallylic substrate isopentenyl (IPP) to its highly electrophilic allylic isomer, dimethylallyl diphosphate (DMAPP). The polypeptide is Isopentenyl-diphosphate Delta-isomerase 1 (IDI1) (Pongo abelii (Sumatran orangutan)).